The chain runs to 522 residues: GMP synthase [glutamine-hydrolyzing] (522 aa).

The 196-residue stretch at 9 to 204 (KILILDFGAQ…VVDICGCQML (196 aa)) folds into the Glutamine amidotransferase type-1 domain. Cys86 serves as the catalytic Nucleophile. Active-site residues include His178 and Glu180. One can recognise a GMPS ATP-PPase domain in the interval 205–397 (WTAANIIEDQ…LGLPHAMVYR (193 aa)). Residue 232 to 238 (SGGVDSS) participates in ATP binding.

Homodimer.

It carries out the reaction XMP + L-glutamine + ATP + H2O = GMP + L-glutamate + AMP + diphosphate + 2 H(+). The protein operates within purine metabolism; GMP biosynthesis; GMP from XMP (L-Gln route): step 1/1. In terms of biological role, catalyzes the synthesis of GMP from XMP. The chain is GMP synthase [glutamine-hydrolyzing] (guaA) from Xylella fastidiosa (strain 9a5c).